Consider the following 181-residue polypeptide: Cytidylate kinase (181 aa).

7–15 serves as a coordination point for ATP; it reads GPPGSGTTS.

Belongs to the cytidylate kinase family. Type 2 subfamily.

It is found in the cytoplasm. It carries out the reaction CMP + ATP = CDP + ADP. It catalyses the reaction dCMP + ATP = dCDP + ADP. The protein is Cytidylate kinase of Methanoculleus marisnigri (strain ATCC 35101 / DSM 1498 / JR1).